We begin with the raw amino-acid sequence, 147 residues long: uncharacterized protein (147 aa).

The segment at 1-37 (MVALFKSSLGRPEQHQTPQIRISPASSNVEHSEKQPR) is disordered. The span at 15–29 (HQTPQIRISPASSNV) shows a compositional bias: polar residues. The Cytochrome b5 heme-binding domain maps to 71–147 (PIPVTKEELA…LKTSFVGFLV (77 aa)). 2 residues coordinate heme: H106 and H129.

It belongs to the cytochrome b5 family.

This is an uncharacterized protein from Schizosaccharomyces pombe (strain 972 / ATCC 24843) (Fission yeast).